We begin with the raw amino-acid sequence, 310 residues long: Calbindin-32 (310 aa).

EF-hand domains are found at residues 35–70, 84–120, 131–166, 177–212, 224–259, and 283–304; these read LSAN…FVSS, TMLE…EENF, ESSV…LLKE, KLIE…KENF, LTKE…LLEL, and TDKH…LAKI. D48, D50, N52, Y54, E59, D98, N100, D102, K104, E109, D144, D146, S148, Y150, E155, D190, N192, D194, R196, E201, D237, D239, S241, T243, and E248 together coordinate Ca(2+).

Belongs to the calbindin family. As to expression, expressed in a large number of neuron of the brain and the thoracic ganglion as well as in two small muscles of the thorax.

The polypeptide is Calbindin-32 (Cbp53E) (Drosophila melanogaster (Fruit fly)).